The following is a 445-amino-acid chain: Protein EMP47 (445 aa).

The N-terminal stretch at 1 to 28 is a signal peptide; it reads MMMLITMKSTVLLSVFTVLATWAGLLEA. The Lumenal portion of the chain corresponds to 29–412; it reads HPLGDTSDAS…DGPQVDEIAR (384 aa). An L-type lectin-like domain is found at 36–254; the sequence is DASKLSSDYS…EIFKMQFFNG (219 aa). A disulfide bond links Cys179 and Cys213. The helical transmembrane segment at 413–433 threads the bilayer; sequence KLMIWLLPLIFIMLVMAYYTF. Residues 430 to 433 are mediates the interactions with COPI and COPII coat complexes; sequence YYTF. The Cytoplasmic portion of the chain corresponds to 434 to 445; sequence RIRQEIIKTKLL. The Di-lysine motif motif lies at 441 to 445; sequence KTKLL.

It belongs to the EMP46/EMP47 family. In terms of assembly, homooligomers. Interacts with EMP46 in the endoplasmic reticulum membrane. Interacts with the coatomer proteins COP1, SEC21 and SEC23.

It localises to the golgi apparatus membrane. It is found in the endoplasmic reticulum membrane. Its function is as follows. Involved in the secretion of glycoproteins and in nucleus architecture and gene silencing. Required for the endoplasmic reticulum exit of EMP46. This Saccharomyces cerevisiae (strain ATCC 204508 / S288c) (Baker's yeast) protein is Protein EMP47 (EMP47).